The primary structure comprises 137 residues: Large ribosomal subunit protein uL16 (137 aa).

It belongs to the universal ribosomal protein uL16 family. In terms of assembly, part of the 50S ribosomal subunit.

Its function is as follows. Binds 23S rRNA and is also seen to make contacts with the A and possibly P site tRNAs. The chain is Large ribosomal subunit protein uL16 from Rhodopseudomonas palustris (strain ATCC BAA-98 / CGA009).